We begin with the raw amino-acid sequence, 271 residues long: Short-chain dehydrogenase/reductase SAT3 (271 aa).

3 residues coordinate NADP(+): Ser-17, Asp-40, and Asn-67. Ser-153 (proton donor) is an active-site residue. Residues Tyr-168, Lys-172, and Ser-203 each coordinate NADP(+). Tyr-168 functions as the Proton acceptor in the catalytic mechanism. The active-site Lowers pKa of active site Tyr is the Lys-172.

Belongs to the short-chain dehydrogenases/reductases (SDR) family.

Its pathway is mycotoxin biosynthesis. Functionally, short-chain dehydrogenase/reductase; part of the satratoxin SC1 cluster involved in the biosynthesis of satratoxins, trichothecene mycotoxins that are associated with human food poisonings. Satratoxins are suggested to be made by products of multiple gene clusters (SC1, SC2 and SC3) that encode 21 proteins in all, including polyketide synthases, acetyltransferases, and other enzymes expected to modify the trichothecene skeleton. SC1 encodes 10 proteins, SAT1 to SAT10. The largest are SAT8, which encodes a putative polyketide synthase (PKS) with a conventional non-reducing architecture, and SAT10, a putative protein containing four ankyrin repeats and thus may be involved in protein scaffolding. The putative short-chain reductase SAT3 may assist the PKS in some capacity. SAT6 contains a secretory lipase domain and acts probably as a trichothecene esterase. SAT5 encodes a putative acetyltransferase, and so, with SAT6, may affect endogenous protection from toxicity. The probable transcription factor SAT9 may regulate the expression of the SC1 cluster. SC2 encodes proteins SAT11 to SAT16, the largest of which encodes the putative reducing PKS SAT13. SAT11 is a cytochrome P450 monooxygenase, while SAT14 and SAT16 are probable acetyltransferases. The SC2 cluster may be regulated by the transcription factor SAT15. SC3 is a small cluster that encodes 5 proteins, SAT17 to SAT21. SAT21 is a putative MFS-type transporter which may have a role in exporting secondary metabolites. The four other proteins putatively encoded in SC3 include the taurine hydroxylase-like protein SAT17, the O-methyltransferase SAT18, the acetyltransferase SAT19, and the Cys6-type zinc finger SAT20, the latter being probably involved in regulation of SC3 expression. The chain is Short-chain dehydrogenase/reductase SAT3 from Stachybotrys chartarum (strain CBS 109288 / IBT 7711) (Toxic black mold).